We begin with the raw amino-acid sequence, 142 residues long: VSLTDEEKHLIQHIWSNVNVVEITAKALERVFYVYPWTTRLFTSFNHNFKASDKGVHDHAVNVSKALSAAIGDLHNVNKNFSALSTKHQKKLGVDTSNFMLLGQAFLVELAAFEKDKFTPQYHKAALKLFEVVTEALSCQYH.

The Globin domain maps to 2–142 (SLTDEEKHLI…VTEALSCQYH (141 aa)). 2 residues coordinate heme b: H59 and H88.

Belongs to the globin family. As to quaternary structure, heterotetramer of two alpha chains and two beta chains. Red blood cells.

Functionally, involved in oxygen transport from the lung to the various peripheral tissues. The chain is Hemoglobin subunit beta-2 (HBB2) from Torpedo marmorata (Marbled electric ray).